A 277-amino-acid polypeptide reads, in one-letter code: Endochitinase CHI (277 aa).

The N-terminal stretch at 1–31 is a signal peptide; sequence MAKPTSRNDRFALFFITLIFLILTVSKPVAS. The 35-residue stretch at 32–66 folds into the Chitin-binding type-1 domain; that stretch reads QNCGCASDFCCSKYGYCGTTDEFCGEGCQAGPCRS. 4 disulfides stabilise this stretch: cysteine 34–cysteine 42, cysteine 36–cysteine 48, cysteine 41–cysteine 55, and cysteine 59–cysteine 64. Residues 75–277 form a catalytic region; the sequence is VSLEGTVTPD…GVAPGDNLTC (203 aa). The active-site Proton donor is glutamate 136. Asparagine 274 is a glycosylation site (N-linked (GlcNAc...) asparagine).

Belongs to the glycosyl hydrolase 19 family. Chitinase class I subfamily.

The catalysed reaction is Random endo-hydrolysis of N-acetyl-beta-D-glucosaminide (1-&gt;4)-beta-linkages in chitin and chitodextrins.. In Arabidopsis thaliana (Mouse-ear cress), this protein is Endochitinase CHI.